Reading from the N-terminus, the 439-residue chain is Proline--tRNA ligase (439 aa).

The protein belongs to the class-II aminoacyl-tRNA synthetase family. ProS type 2 subfamily. Homodimer.

The protein localises to the cytoplasm. It carries out the reaction tRNA(Pro) + L-proline + ATP = L-prolyl-tRNA(Pro) + AMP + diphosphate. Its function is as follows. Catalyzes the attachment of proline to tRNA(Pro) in a two-step reaction: proline is first activated by ATP to form Pro-AMP and then transferred to the acceptor end of tRNA(Pro). The polypeptide is Proline--tRNA ligase (Rhodopseudomonas palustris (strain BisA53)).